The primary structure comprises 464 residues: tRNA(Ile2) 2-agmatinylcytidine synthetase TiaS (464 aa).

Belongs to the TiaS family.

The protein localises to the cytoplasm. The catalysed reaction is cytidine(34) in tRNA(Ile2) + agmatine + ATP + H2O = 2-agmatinylcytidine(34) in tRNA(Ile2) + AMP + 2 phosphate + 2 H(+). Functionally, ATP-dependent agmatine transferase that catalyzes the formation of 2-agmatinylcytidine (agm2C) at the wobble position (C34) of tRNA(Ile2), converting the codon specificity from AUG to AUA. The chain is tRNA(Ile2) 2-agmatinylcytidine synthetase TiaS from Ignisphaera aggregans (strain DSM 17230 / JCM 13409 / AQ1.S1).